The sequence spans 121 residues: Large ribosomal subunit protein uL14 (121 aa).

Belongs to the universal ribosomal protein uL14 family. In terms of assembly, part of the 50S ribosomal subunit. Forms a cluster with proteins L3 and L19. In the 70S ribosome, L14 and L19 interact and together make contacts with the 16S rRNA in bridges B5 and B8.

Its function is as follows. Binds to 23S rRNA. Forms part of two intersubunit bridges in the 70S ribosome. This is Large ribosomal subunit protein uL14 from Parabacteroides distasonis (strain ATCC 8503 / DSM 20701 / CIP 104284 / JCM 5825 / NCTC 11152).